Consider the following 286-residue polypeptide: Nucleotide-binding protein APL_0334 (286 aa).

8 to 15 is a binding site for ATP; the sequence is GRSGSGKS. 56–59 serves as a coordination point for GTP; it reads DIRN.

Belongs to the RapZ-like family.

Displays ATPase and GTPase activities. This is Nucleotide-binding protein APL_0334 from Actinobacillus pleuropneumoniae serotype 5b (strain L20).